The chain runs to 632 residues: MAU2 chromatid cohesion factor homolog (632 aa).

2 TPR repeats span residues 453–486 and 493–526; these read GGFY…ANAE and SCSL…ASKI.

The protein belongs to the SCC4/mau-2 family. In terms of assembly, interacts with Nipped-B to form the cohesin loading complex.

Its subcellular location is the nucleus. It is found in the nucleoplasm. Required for association of the cohesin complex with chromatin during interphase. Plays a role in sister chromatid cohesion and normal progression through prometaphase. The chain is MAU2 chromatid cohesion factor homolog from Drosophila yakuba (Fruit fly).